We begin with the raw amino-acid sequence, 331 residues long: Ketol-acid reductoisomerase (NADP(+)) (331 aa).

In terms of domain architecture, KARI N-terminal Rossmann spans 2 to 182 (AKLFYDSDAD…GGTRAGILET (181 aa)). NADP(+) contacts are provided by residues 25–28 (YGSQ), S51, S53, and 83–86 (DEFQ). The active site involves H108. G134 contacts NADP(+). Positions 183–328 (NFKEETETDL…KTLRSMFSWL (146 aa)) constitute a KARI C-terminal knotted domain. 4 residues coordinate Mg(2+): D191, E195, E227, and E231. S252 contacts substrate.

This sequence belongs to the ketol-acid reductoisomerase family. The cofactor is Mg(2+).

It catalyses the reaction (2R)-2,3-dihydroxy-3-methylbutanoate + NADP(+) = (2S)-2-acetolactate + NADPH + H(+). The enzyme catalyses (2R,3R)-2,3-dihydroxy-3-methylpentanoate + NADP(+) = (S)-2-ethyl-2-hydroxy-3-oxobutanoate + NADPH + H(+). It participates in amino-acid biosynthesis; L-isoleucine biosynthesis; L-isoleucine from 2-oxobutanoate: step 2/4. Its pathway is amino-acid biosynthesis; L-valine biosynthesis; L-valine from pyruvate: step 2/4. Involved in the biosynthesis of branched-chain amino acids (BCAA). Catalyzes an alkyl-migration followed by a ketol-acid reduction of (S)-2-acetolactate (S2AL) to yield (R)-2,3-dihydroxy-isovalerate. In the isomerase reaction, S2AL is rearranged via a Mg-dependent methyl migration to produce 3-hydroxy-3-methyl-2-ketobutyrate (HMKB). In the reductase reaction, this 2-ketoacid undergoes a metal-dependent reduction by NADPH to yield (R)-2,3-dihydroxy-isovalerate. The protein is Ketol-acid reductoisomerase (NADP(+)) of Prochlorococcus marinus (strain NATL1A).